The chain runs to 514 residues: tRNA-2-methylthio-N(6)-dimethylallyladenosine synthase (514 aa).

In terms of domain architecture, MTTase N-terminal spans 68-186 (RTFLIKTYGC…LPEILEEAYL (119 aa)). Residues Cys77, Cys113, Cys147, Cys223, Cys227, and Cys230 each contribute to the [4Fe-4S] cluster site. The Radical SAM core domain occupies 209-439 (RDGHIKAWVN…NKKVGIYSQQ (231 aa)). A TRAM domain is found at 442 to 505 (SQYEGKIVTV…QYSLNGTFIQ (64 aa)).

It belongs to the methylthiotransferase family. MiaB subfamily. As to quaternary structure, monomer. [4Fe-4S] cluster serves as cofactor.

It is found in the cytoplasm. The enzyme catalyses N(6)-dimethylallyladenosine(37) in tRNA + (sulfur carrier)-SH + AH2 + 2 S-adenosyl-L-methionine = 2-methylsulfanyl-N(6)-dimethylallyladenosine(37) in tRNA + (sulfur carrier)-H + 5'-deoxyadenosine + L-methionine + A + S-adenosyl-L-homocysteine + 2 H(+). In terms of biological role, catalyzes the methylthiolation of N6-(dimethylallyl)adenosine (i(6)A), leading to the formation of 2-methylthio-N6-(dimethylallyl)adenosine (ms(2)i(6)A) at position 37 in tRNAs that read codons beginning with uridine. The polypeptide is tRNA-2-methylthio-N(6)-dimethylallyladenosine synthase (Staphylococcus epidermidis (strain ATCC 35984 / DSM 28319 / BCRC 17069 / CCUG 31568 / BM 3577 / RP62A)).